The chain runs to 201 residues: Guanylyl cyclase-activating protein 1 (201 aa).

The N-myristoyl glycine moiety is linked to residue Gly2. A Deamidated asparagine modification is found at Asn3. 4 EF-hand domains span residues 31–49, 51–86, 87–122, and 131–166; these read SGQL…KNLS, SASQ…VLKG, KVEQ…IRAI, and TAEE…DQML. Ca(2+)-binding residues include Asp64, Asn66, Asp68, Tyr70, Glu75, Asp100, Asp102, Asn104, Cys106, Glu111, Asp144, Asn146, Asp148, Glu150, and Glu155.

Homodimer. In the retina, it is expressed in rod and cone photoreceptors.

It is found in the membrane. The protein localises to the photoreceptor inner segment. Its subcellular location is the cell projection. It localises to the cilium. The protein resides in the photoreceptor outer segment. In terms of biological role, stimulates retinal guanylyl cyclase when free calcium ions concentration is low and inhibits guanylyl cyclase when free calcium ions concentration is elevated. This Ca(2+)-sensitive regulation of retinal guanylyl cyclase is a key event in recovery of the dark state of rod photoreceptors following light exposure. May be involved in cone photoreceptor light response and recovery of response in bright light. This chain is Guanylyl cyclase-activating protein 1 (GUCA1A), found in Homo sapiens (Human).